The following is a 224-amino-acid chain: LexA repressor (224 aa).

The segment at residues 38–58 (IREIGDAVGLTSTSSVAHQLR) is a DNA-binding region (H-T-H motif). Residues 71–82 (NRPRAVDVRGID) show a composition bias toward basic and acidic residues. The interval 71–96 (NRPRAVDVRGIDDAGTPSATTDVIGS) is disordered. Active-site for autocatalytic cleavage activity residues include Ser-148 and Lys-185.

It belongs to the peptidase S24 family. In terms of assembly, homodimer.

It catalyses the reaction Hydrolysis of Ala-|-Gly bond in repressor LexA.. In terms of biological role, represses a number of genes involved in the response to DNA damage (SOS response), including recA and lexA. In the presence of single-stranded DNA, RecA interacts with LexA causing an autocatalytic cleavage which disrupts the DNA-binding part of LexA, leading to derepression of the SOS regulon and eventually DNA repair. This chain is LexA repressor, found in Mycobacteroides abscessus (strain ATCC 19977 / DSM 44196 / CCUG 20993 / CIP 104536 / JCM 13569 / NCTC 13031 / TMC 1543 / L948) (Mycobacterium abscessus).